The following is a 299-amino-acid chain: Ribosomal RNA small subunit methyltransferase A (299 aa).

S-adenosyl-L-methionine contacts are provided by asparagine 44, valine 46, glycine 71, glutamate 92, aspartate 122, and asparagine 141.

Belongs to the class I-like SAM-binding methyltransferase superfamily. rRNA adenine N(6)-methyltransferase family. RsmA subfamily.

It localises to the cytoplasm. It catalyses the reaction adenosine(1518)/adenosine(1519) in 16S rRNA + 4 S-adenosyl-L-methionine = N(6)-dimethyladenosine(1518)/N(6)-dimethyladenosine(1519) in 16S rRNA + 4 S-adenosyl-L-homocysteine + 4 H(+). Its function is as follows. Specifically dimethylates two adjacent adenosines (A1518 and A1519) in the loop of a conserved hairpin near the 3'-end of 16S rRNA in the 30S particle. May play a critical role in biogenesis of 30S subunits. This chain is Ribosomal RNA small subunit methyltransferase A, found in Rhodococcus erythropolis (strain PR4 / NBRC 100887).